The chain runs to 92 residues: Small ribosomal subunit protein uS19 (92 aa).

The protein belongs to the universal ribosomal protein uS19 family.

In terms of biological role, protein S19 forms a complex with S13 that binds strongly to the 16S ribosomal RNA. This is Small ribosomal subunit protein uS19 from Bradyrhizobium diazoefficiens (strain JCM 10833 / BCRC 13528 / IAM 13628 / NBRC 14792 / USDA 110).